The primary structure comprises 236 residues: UPF0257 lipoprotein YnfC (236 aa).

The signal sequence occupies residues 1–16 (MKYKLLPCLLAILLTG). Cys17 carries N-palmitoyl cysteine lipidation. Residue Cys17 is the site of S-diacylglycerol cysteine attachment.

This sequence belongs to the UPF0257 family.

It localises to the cell membrane. The sequence is that of UPF0257 lipoprotein YnfC from Escherichia coli O157:H7.